A 310-amino-acid polypeptide reads, in one-letter code: MMDNHSSATEFHLLGFPGSQGLHHILFAIFFFFYLVTLMGNTVIIVIVCVDKRLQSPMYFFLSHLSTLEILVTTIIVPMMLWGLLFLGCRQYLSLHVSLNFSCGTMEFALLGVMAVDRYVAVCNPLRYNIIMNSSTCIWVVIVSWVFGFLSEIWPIYATFQFTFRKSNSLDHFYCDRGQLLKLSCDNTLLTEFILFLMAVFILIGSLIPTIVSYTYIISTILKIPSASGRRKAFSTFASHFTCVVIGYGSCLFLYVKPKQTQGVEYNKIVSLLVSVLTPFLNPFIFTLRNDKVKEALRDGMKRCCQLLKD.

The Extracellular segment spans residues 1 to 24 (MMDNHSSATEFHLLGFPGSQGLHH). A glycan (N-linked (GlcNAc...) asparagine) is linked at Asn4. The chain crosses the membrane as a helical span at residues 25 to 45 (ILFAIFFFFYLVTLMGNTVII). At 46–53 (VIVCVDKR) the chain is on the cytoplasmic side. A helical membrane pass occupies residues 54–74 (LQSPMYFFLSHLSTLEILVTT). Residues 75–98 (IIVPMMLWGLLFLGCRQYLSLHVS) are Extracellular-facing. Residues 117 to 135 (DRYVAVCNPLRYNIIMNSS) are Cytoplasmic-facing. The helical transmembrane segment at 136-156 (TCIWVVIVSWVFGFLSEIWPI) threads the bilayer. The Extracellular portion of the chain corresponds to 157 to 193 (YATFQFTFRKSNSLDHFYCDRGQLLKLSCDNTLLTEF). A helical membrane pass occupies residues 194-213 (ILFLMAVFILIGSLIPTIVS). Residues 214-233 (YTYIISTILKIPSASGRRKA) are Cytoplasmic-facing. A helical transmembrane segment spans residues 234–254 (FSTFASHFTCVVIGYGSCLFL). The Extracellular portion of the chain corresponds to 255-267 (YVKPKQTQGVEYN). The helical transmembrane segment at 268-288 (KIVSLLVSVLTPFLNPFIFTL) threads the bilayer. The Cytoplasmic segment spans residues 289-310 (RNDKVKEALRDGMKRCCQLLKD).

It belongs to the G-protein coupled receptor 1 family.

It is found in the cell membrane. Odorant receptor. The polypeptide is Olfactory receptor 9A2 (OR9A2) (Homo sapiens (Human)).